The following is a 92-amino-acid chain: Secreted RxLR effector protein 21 (92 aa).

The N-terminal stretch at 1 to 21 is a signal peptide; the sequence is MNLSTLLLTLACISQLHGGSA. The short motif at 30 to 33 is the RxLR element; it reads RQLR.

The protein belongs to the RxLR effector family.

It localises to the secreted. The protein localises to the host nucleus. The protein resides in the host cytoplasm. Secreted effector that completely suppresses the host cell death induced by cell death-inducing proteins. The chain is Secreted RxLR effector protein 21 from Plasmopara viticola (Downy mildew of grapevine).